Here is a 185-residue protein sequence, read N- to C-terminus: Translation initiation factor IF-3 (185 aa).

The protein belongs to the IF-3 family. In terms of assembly, monomer.

It localises to the cytoplasm. IF-3 binds to the 30S ribosomal subunit and shifts the equilibrium between 70S ribosomes and their 50S and 30S subunits in favor of the free subunits, thus enhancing the availability of 30S subunits on which protein synthesis initiation begins. The protein is Translation initiation factor IF-3 of Rickettsia typhi (strain ATCC VR-144 / Wilmington).